We begin with the raw amino-acid sequence, 482 residues long: Tektin (482 aa).

Coiled-coil stretches lie at residues 100 to 129 (CLAEVISEIAELLSTKKRLEERNGKVQAKI), 171 to 204 (ARAVAQVDREVAQLEAVRAKLEADLRDKTEALRV), 282 to 324 (RLNE…ALTS), 376 to 407 (VKVAAVDREIAALDATAAQLESNIADKDDALR), and 441 to 478 (RTQTLARIRELEASLTSARREREAMESSIRQLRDTMGG). Residues 311–330 (EQARAKGQRSALTSALDDKR) form a disordered region. Arg-462 is subject to Asymmetric dimethylarginine.

This sequence belongs to the tektin family. Asymmetrically dimethylated at Arg-462 during flagellum resorption. Probably methylated by PRMT1.

It localises to the cytoplasm. The protein resides in the cytoskeleton. Its subcellular location is the flagellum axoneme. The protein localises to the flagellum basal body. Structural component of ciliary and flagellar microtubules. Plays a key role in the assembly or attachment of the inner dynein arm to microtubules in flagella and cilia. Forms filamentous polymers in the walls of ciliary and flagellar microtubules. This chain is Tektin, found in Chlamydomonas reinhardtii (Chlamydomonas smithii).